The following is a 962-amino-acid chain: Glycine dehydrogenase (decarboxylating) (962 aa).

Position 709 is an N6-(pyridoxal phosphate)lysine (Lys-709).

Belongs to the GcvP family. As to quaternary structure, the glycine cleavage system is composed of four proteins: P, T, L and H. Pyridoxal 5'-phosphate is required as a cofactor.

The enzyme catalyses N(6)-[(R)-lipoyl]-L-lysyl-[glycine-cleavage complex H protein] + glycine + H(+) = N(6)-[(R)-S(8)-aminomethyldihydrolipoyl]-L-lysyl-[glycine-cleavage complex H protein] + CO2. Its function is as follows. The glycine cleavage system catalyzes the degradation of glycine. The P protein binds the alpha-amino group of glycine through its pyridoxal phosphate cofactor; CO(2) is released and the remaining methylamine moiety is then transferred to the lipoamide cofactor of the H protein. This is Glycine dehydrogenase (decarboxylating) from Shewanella oneidensis (strain ATCC 700550 / JCM 31522 / CIP 106686 / LMG 19005 / NCIMB 14063 / MR-1).